Reading from the N-terminus, the 343-residue chain is Armadillo repeat-containing protein 10 (343 aa).

Residues 5–27 (RGAGWVAAGLLLGAGACYCIYRL) traverse the membrane as a helical segment. Residues 43–83 (SKSAGALEEGTSEGQLCGRSARPQTGGTWESQWSKTSQPED) form a disordered region. At serine 45 the chain carries Phosphoserine. The residue at position 50 (glutamate 50) is a Phosphothreonine. Polar residues predominate over residues 64 to 82 (RPQTGGTWESQWSKTSQPE). Threonine 85 carries the post-translational modification Phosphothreonine. The ARM repeat unit spans residues 138–180 (GGIPIVANKINHSNQSIKEKALNALNNLSVNVENQIKIKIYIS).

In terms of assembly, interacts with the DNA-binding domain of p53/TP53. Expressed in all tissues tested with higher expression in placenta, liver, kidney, heart and brain.

Its subcellular location is the endoplasmic reticulum membrane. It localises to the mitochondrion outer membrane. In terms of biological role, may play a role in cell survival and cell growth. May suppress the transcriptional activity of p53/TP53. The chain is Armadillo repeat-containing protein 10 (ARMC10) from Homo sapiens (Human).